Here is a 72-residue protein sequence, read N- to C-terminus: MNHLVKVLIVVVAIALVLCEAQVNFSPGWGTGKRSAVQDSPCKGSAESLMYIYKLVQNEAQKILECEKFSSN.

The signal sequence occupies residues 1–21 (MNHLVKVLIVVVAIALVLCEA). Pyrrolidone carboxylic acid is present on Q22. T31 bears the Threonine amide mark.

This sequence belongs to the AKH/HRTH/RPCH family. Expressed in corpora cardiaca.

The protein resides in the secreted. Functionally, hypertrehalosaemic factors are neuropeptides that elevate the level of trehalose in the hemolymph (trehalose is the major carbohydrate in the hemolymph of insects). The chain is Hypertrehalosaemic prohormone from Blaberus discoidalis (Tropical cockroach).